The primary structure comprises 494 residues: Truncated non-functional calcium-binding mitochondrial carrier SAL1-1 (494 aa).

The region spanning 11–46 (QRDIRYACLFKELDVKGNGQVTLDNLISAFEKNDHP) is the EF-hand 1 domain. Positions 65, 70, 93, 95, 97, 99, and 104 each coordinate Ca(2+). 3 EF-hand domains span residues 80 to 115 (NAESQIWNGFQRIDLDHDGKIGINEINRYLSDLDNQ), 120 to 155 (NELNHELSNEKVNKFSRFFEWAFPKRKANIALRGQA), and 156 to 191 (SHKKNTDNDRSKKTTDSDLYVTYDQWRDFLLLVPRK). Positions 161 and 166 each coordinate Ca(2+). Solcar repeat units follow at residues 225–332 (IRGF…TKKI) and 345–434 (LSKF…LKKM). 5 consecutive transmembrane segments (helical) span residues 231 to 248 (FIAGGISGVISRTCTAPF), 307 to 326 (GNGLNVIKVFPESSIKFGSF), 355 to 368 (GLAGMAAQFSVYPI), 409 to 428 (RCHSRYSGHISLCCIRFGDF), and 458 to 475 (TSNGCIQWNCRSFCCLSN). Residues 452 to 494 (SKQPGCTSNGCIQWNCRSFCCLSNQSFKNKTTSPRNICTSLCV) form a Solcar 3; truncated repeat.

It belongs to the mitochondrial carrier (TC 2.A.29) family.

The protein localises to the mitochondrion inner membrane. Calcium-dependent mitochondrial solute carrier. This is Truncated non-functional calcium-binding mitochondrial carrier SAL1-1 (SAL1) from Saccharomyces cerevisiae (strain ATCC 204508 / S288c) (Baker's yeast).